We begin with the raw amino-acid sequence, 458 residues long: Argininosuccinate lyase (458 aa).

Belongs to the lyase 1 family. Argininosuccinate lyase subfamily.

The protein resides in the cytoplasm. It catalyses the reaction 2-(N(omega)-L-arginino)succinate = fumarate + L-arginine. Its pathway is amino-acid biosynthesis; L-arginine biosynthesis; L-arginine from L-ornithine and carbamoyl phosphate: step 3/3. The protein is Argininosuccinate lyase of Salmonella choleraesuis (strain SC-B67).